Consider the following 314-residue polypeptide: Olfactory receptor 5P68 (314 aa).

Residues 1–28 (MAFLHNGNHTAVTEFILLGLTDDPVFRV) lie on the Extracellular side of the membrane. N-linked (GlcNAc...) asparagine glycosylation is present at Asn-8. The helical transmembrane segment at 29–49 (ILFTIILCIYLVTVSGNLSTI) threads the bilayer. Residues 50–57 (LLIRVSSQ) are Cytoplasmic-facing. The chain crosses the membrane as a helical span at residues 58–78 (LHHPMYFFLSHLASVDIGYSS). At 79–102 (SVTPNMLANFLVEKNTISYLGCTI) the chain is on the extracellular side. Cys-100 and Cys-192 form a disulfide bridge. A helical membrane pass occupies residues 103-123 (QLSLAAFCGTVECFLLATMAY). The Cytoplasmic portion of the chain corresponds to 124–136 (DRFMAICSPLLYS). A helical transmembrane segment spans residues 137 to 157 (TKMSTQVCIQLIVGSYIGGFL). The Extracellular portion of the chain corresponds to 158-199 (NASSFTLFFLSFLFCGPNRINHFYCDFAPLVALSCSDVSVSE). The helical transmembrane segment at 200–220 (VVTSFFSGSVTMITMLVIAIS) threads the bilayer. Topologically, residues 221 to 240 (YTYILITILKMRSTEGRHKA) are cytoplasmic. A helical transmembrane segment spans residues 241-261 (FSTCTSHLTAVTLFYGTITFI). The Extracellular portion of the chain corresponds to 262–274 (YVMPKSSFSTDQN). The chain crosses the membrane as a helical span at residues 275–295 (KVVSVFYMVVIPMLNPLIYSL). The Cytoplasmic portion of the chain corresponds to 296-314 (RNNEIKDALKRHLGKKIFS).

Belongs to the G-protein coupled receptor 1 family.

It localises to the cell membrane. Its function is as follows. Potential odorant receptor. The sequence is that of Olfactory receptor 5P68 from Mus musculus (Mouse).